Consider the following 419-residue polypeptide: Argininosuccinate synthase (419 aa).

ATP-binding positions include 9 to 17 and Ala-35; that span reads AYSGGLDTS. L-citrulline is bound by residues Tyr-86 and Ser-91. 114–122 provides a ligand contact to ATP; it reads AHGATGKGN. 3 residues coordinate L-aspartate: Thr-118, Asn-122, and Asp-123. Asn-122 is a binding site for L-citrulline. L-citrulline contacts are provided by Arg-126, Ser-179, Ser-188, Glu-270, and Tyr-282.

It belongs to the argininosuccinate synthase family. Type 1 subfamily. Homotetramer.

The catalysed reaction is L-citrulline + L-aspartate + ATP = 2-(N(omega)-L-arginino)succinate + AMP + diphosphate + H(+). The protein operates within amino-acid biosynthesis; L-arginine biosynthesis; L-arginine from L-ornithine and carbamoyl phosphate: step 2/3. Its pathway is nitrogen metabolism; urea cycle; (N(omega)-L-arginino)succinate from L-aspartate and L-citrulline: step 1/1. This is Argininosuccinate synthase from Drosophila melanogaster (Fruit fly).